Consider the following 88-residue polypeptide: Small ribosomal subunit protein bS20 (88 aa).

Residues 1–21 (MANSKSAKKRALQSEKRRQHN) show a composition bias toward basic residues. The disordered stretch occupies residues 1 to 27 (MANSKSAKKRALQSEKRRQHNASRSSM).

It belongs to the bacterial ribosomal protein bS20 family.

Binds directly to 16S ribosomal RNA. The sequence is that of Small ribosomal subunit protein bS20 from Shewanella piezotolerans (strain WP3 / JCM 13877).